Reading from the N-terminus, the 293-residue chain is Pyridoxal 5'-phosphate synthase subunit PdxS (293 aa).

D23 provides a ligand contact to D-ribose 5-phosphate. The active-site Schiff-base intermediate with D-ribose 5-phosphate is the K80. G152 serves as a coordination point for D-ribose 5-phosphate. D-glyceraldehyde 3-phosphate is bound at residue R164. Residues G213 and 234 to 235 each bind D-ribose 5-phosphate; that span reads GS.

This sequence belongs to the PdxS/SNZ family. In the presence of PdxT, forms a dodecamer of heterodimers.

The catalysed reaction is aldehydo-D-ribose 5-phosphate + D-glyceraldehyde 3-phosphate + L-glutamine = pyridoxal 5'-phosphate + L-glutamate + phosphate + 3 H2O + H(+). The protein operates within cofactor biosynthesis; pyridoxal 5'-phosphate biosynthesis. Catalyzes the formation of pyridoxal 5'-phosphate from ribose 5-phosphate (RBP), glyceraldehyde 3-phosphate (G3P) and ammonia. The ammonia is provided by the PdxT subunit. Can also use ribulose 5-phosphate and dihydroxyacetone phosphate as substrates, resulting from enzyme-catalyzed isomerization of RBP and G3P, respectively. This is Pyridoxal 5'-phosphate synthase subunit PdxS from Niallia circulans (Bacillus circulans).